Reading from the N-terminus, the 415-residue chain is Serine hydroxymethyltransferase (415 aa).

Residues Leu-122 and 126-128 contribute to the (6S)-5,6,7,8-tetrahydrofolate site; that span reads GHL. N6-(pyridoxal phosphate)lysine is present on Lys-230.

The protein belongs to the SHMT family. Homodimer. It depends on pyridoxal 5'-phosphate as a cofactor.

The protein resides in the cytoplasm. It carries out the reaction (6R)-5,10-methylene-5,6,7,8-tetrahydrofolate + glycine + H2O = (6S)-5,6,7,8-tetrahydrofolate + L-serine. Its pathway is one-carbon metabolism; tetrahydrofolate interconversion. The protein operates within amino-acid biosynthesis; glycine biosynthesis; glycine from L-serine: step 1/1. In terms of biological role, catalyzes the reversible interconversion of serine and glycine with tetrahydrofolate (THF) serving as the one-carbon carrier. This reaction serves as the major source of one-carbon groups required for the biosynthesis of purines, thymidylate, methionine, and other important biomolecules. Also exhibits THF-independent aldolase activity toward beta-hydroxyamino acids, producing glycine and aldehydes, via a retro-aldol mechanism. The polypeptide is Serine hydroxymethyltransferase (Cupriavidus taiwanensis (strain DSM 17343 / BCRC 17206 / CCUG 44338 / CIP 107171 / LMG 19424 / R1) (Ralstonia taiwanensis (strain LMG 19424))).